Reading from the N-terminus, the 430-residue chain is Serine--tRNA ligase (430 aa).

237-239 contributes to the L-serine binding site; the sequence is TAE. An ATP-binding site is contributed by 268–270; sequence RSE. Glu291 serves as a coordination point for L-serine. An ATP-binding site is contributed by 355–358; the sequence is EISS. An L-serine-binding site is contributed by Ser391.

Belongs to the class-II aminoacyl-tRNA synthetase family. Type-1 seryl-tRNA synthetase subfamily. Homodimer. The tRNA molecule binds across the dimer.

Its subcellular location is the cytoplasm. It catalyses the reaction tRNA(Ser) + L-serine + ATP = L-seryl-tRNA(Ser) + AMP + diphosphate + H(+). The enzyme catalyses tRNA(Sec) + L-serine + ATP = L-seryl-tRNA(Sec) + AMP + diphosphate + H(+). It functions in the pathway aminoacyl-tRNA biosynthesis; selenocysteinyl-tRNA(Sec) biosynthesis; L-seryl-tRNA(Sec) from L-serine and tRNA(Sec): step 1/1. Its function is as follows. Catalyzes the attachment of serine to tRNA(Ser). Is also able to aminoacylate tRNA(Sec) with serine, to form the misacylated tRNA L-seryl-tRNA(Sec), which will be further converted into selenocysteinyl-tRNA(Sec). In Salmonella heidelberg (strain SL476), this protein is Serine--tRNA ligase.